Consider the following 187-residue polypeptide: Guanylate kinase (187 aa).

Serine 2 bears the N-acetylserine mark. The Guanylate kinase-like domain maps to 2–184 (SRPIVISGPS…AYKELKDFIF (183 aa)). 9 to 16 (GPSGTGKS) is an ATP binding site. GMP is bound by residues serine 35, 39-42 (RTPR), tyrosine 51, glutamate 70, 79-81 (YGS), and aspartate 101. Phosphoserine is present on serine 149. Residue tyrosine 157 is modified to Phosphotyrosine.

Belongs to the guanylate kinase family. Monomer.

The enzyme catalyses GMP + ATP = GDP + ADP. Catalyzes the reversible transfer of the terminal phosphoryl group of ATP to the acceptor molecule GMP. Essential for recycling GMP and indirectly, cGMP. The polypeptide is Guanylate kinase (GUK1) (Saccharomyces cerevisiae (strain ATCC 204508 / S288c) (Baker's yeast)).